The following is a 124-amino-acid chain: Small ribosomal subunit protein eS25 (124 aa).

The segment covering methionine 1–valine 22 has biased composition (basic and acidic residues). A disordered region spans residues methionine 1–glycine 37. Over residues glycine 27–glycine 37 the composition is skewed to basic residues.

The protein belongs to the eukaryotic ribosomal protein eS25 family. As to quaternary structure, component of the small ribosomal subunit.

It is found in the cytoplasm. Component of the small ribosomal subunit. The ribosome is a large ribonucleoprotein complex responsible for the synthesis of proteins in the cell. In Danio rerio (Zebrafish), this protein is Small ribosomal subunit protein eS25 (rps25).